The sequence spans 278 residues: Large ribosomal subunit protein uL2 (278 aa).

The disordered stretch occupies residues 225–278; it reads MNPVDHPHGGGEGRTSGGRHPVTPWGKPTKGKKTRANKATDKYIVRSRHQKKKG. A compositionally biased stretch (basic residues) spans 269 to 278; the sequence is VRSRHQKKKG.

Belongs to the universal ribosomal protein uL2 family. Part of the 50S ribosomal subunit. Forms a bridge to the 30S subunit in the 70S ribosome.

Functionally, one of the primary rRNA binding proteins. Required for association of the 30S and 50S subunits to form the 70S ribosome, for tRNA binding and peptide bond formation. It has been suggested to have peptidyltransferase activity; this is somewhat controversial. Makes several contacts with the 16S rRNA in the 70S ribosome. The chain is Large ribosomal subunit protein uL2 from Parvibaculum lavamentivorans (strain DS-1 / DSM 13023 / NCIMB 13966).